We begin with the raw amino-acid sequence, 117 residues long: uncharacterized protein (117 aa).

An N-terminal signal peptide occupies residues 1–24; sequence MMTEFGSAMTLVTGLVAYGAYVKS. The interval 42-117 is disordered; that stretch reads EKENFNYNNN…NNQIKRRLFD (76 aa). The segment covering 46-95 has biased composition (low complexity); the sequence is FNYNNNNNNNNNNNNNNSNNNDNNNNNNSNSNNNNNNNNNNNNNNNNNIN. N-linked (GlcNAc...) asparagine glycosylation is found at N61 and N72. Polar residues predominate over residues 96–110; it reads DKQINGTNIFDSNNQ.

It localises to the secreted. This is an uncharacterized protein from Dictyostelium discoideum (Social amoeba).